A 369-amino-acid chain; its full sequence is Ribosome-interacting GTPase 1 (369 aa).

Ser-2 is subject to N-acetylserine. The region spanning 66 to 292 is the OBG-type G domain; sequence ASVGFVGFPS…LLQVMWDRLN (227 aa). GTP contacts are provided by residues 72 to 79, 118 to 122, and 250 to 253; these read GFPSVGKS, DLPGI, and NKID. Residues 292 to 368 form the TGS domain; the sequence is NLVRIYTKPK…EDEDVVTILK (77 aa).

Belongs to the TRAFAC class OBG-HflX-like GTPase superfamily. OBG GTPase family. In terms of assembly, associates with translating polyribosomes. Interacts with GIR2, TMA46, YAP1 and YGR250C.

The protein localises to the cytoplasm. Involved in ribosomal function. The protein is Ribosome-interacting GTPase 1 (RBG1) of Saccharomyces cerevisiae (strain ATCC 204508 / S288c) (Baker's yeast).